We begin with the raw amino-acid sequence, 136 residues long: Small ribosomal subunit protein uS9 (136 aa).

The protein belongs to the universal ribosomal protein uS9 family.

This chain is Small ribosomal subunit protein uS9, found in Borrelia recurrentis (strain A1).